Reading from the N-terminus, the 343-residue chain is NADH-quinone oxidoreductase subunit H (343 aa).

The next 8 membrane-spanning stretches (helical) occupy residues 19 to 39 (VAWT…GVAY), 89 to 109 (ALFI…WAVI), 124 to 144 (LLYV…AGWA), 158 to 178 (AAQI…VLMA), 198 to 218 (WYLW…VAET), 257 to 277 (ILVA…PVAF), 279 to 299 (PDGI…FLWF), and 314 to 334 (LGWK…GGMM).

It belongs to the complex I subunit 1 family. As to quaternary structure, NDH-1 is composed of 14 different subunits. Subunits NuoA, H, J, K, L, M, N constitute the membrane sector of the complex.

Its subcellular location is the cell inner membrane. It catalyses the reaction a quinone + NADH + 5 H(+)(in) = a quinol + NAD(+) + 4 H(+)(out). Functionally, NDH-1 shuttles electrons from NADH, via FMN and iron-sulfur (Fe-S) centers, to quinones in the respiratory chain. The immediate electron acceptor for the enzyme in this species is believed to be ubiquinone. Couples the redox reaction to proton translocation (for every two electrons transferred, four hydrogen ions are translocated across the cytoplasmic membrane), and thus conserves the redox energy in a proton gradient. This subunit may bind ubiquinone. This is NADH-quinone oxidoreductase subunit H from Thiobacillus denitrificans (strain ATCC 25259 / T1).